The chain runs to 444 residues: Sperm-associated antigen 4 protein (444 aa).

The tract at residues 1–109 (MRRNPRPGSA…GGASEPSGSP (109 aa)) is disordered. Residues 19–36 (NFYSENSNSSHSATSGDS) show a composition bias toward low complexity. 2 helical membrane-spanning segments follow: residues 137-159 (FLSL…LVCV) and 166-188 (IRFL…WGLL). Residues 204–241 (LSQYHHRVHSQGQQLQQLQAELSKLHKEVTSVRAAHSE) are a coiled coil. The SUN domain maps to 267-428 (GASIDLEKTS…YRVRAHGVRI (162 aa)).

In terms of assembly, self-associates. Interacts with ODF1. May associate with microtubules. Interacts with SUN3 and SYNE1; suggesting the formation of a LINC complexs; a SUN domain-based heterotrimer of SPAG4 and SUN3 may associate with SYNE1. Interacts with SEPT12 and LMNB1; during spermatogenesis. As to expression, testis specific. Exclusively expressed in spermatids.

It localises to the membrane. Its subcellular location is the cytoplasm. The protein localises to the cytoskeleton. The protein resides in the flagellum axoneme. It is found in the nucleus envelope. It localises to the nucleus inner membrane. Involved in spermatogenesis. Required for sperm head formation but not required to establish and maintain general polarity of the sperm head. Required for anchoring and organization of the manchette. Required for targeting of SUN3 and probably SYNE1 through a probable SUN1:SYNE3 LINC complex to the nuclear envelope and involved in accurate posterior sperm head localization of the complex. May anchor SUN3 the nuclear envelope. Involved in maintenance of the nuclear envelope integrity. May assist the organization and assembly of outer dense fibers (ODFs), a specific structure of the sperm tail. The protein is Sperm-associated antigen 4 protein (Spag4) of Rattus norvegicus (Rat).